The sequence spans 540 residues: Thiamine biosynthetic bifunctional enzyme (540 aa).

A thiamine-phosphate synthase region spans residues M1 to E238. 4-amino-2-methyl-5-(diphosphooxymethyl)pyrimidine-binding positions include Q43–K47 and N75. Residues D76 and D95 each contribute to the Mg(2+) site. S114 contributes to the 4-amino-2-methyl-5-(diphosphooxymethyl)pyrimidine binding site. T143–T145 contributes to the 2-[(2R,5Z)-2-carboxy-4-methylthiazol-5(2H)-ylidene]ethyl phosphate binding site. K146 is a 4-amino-2-methyl-5-(diphosphooxymethyl)pyrimidine binding site. 2-[(2R,5Z)-2-carboxy-4-methylthiazol-5(2H)-ylidene]ethyl phosphate-binding positions include G181 and V209–S210. The segment at C239–K540 is hydroxyethylthiazole kinase. Residue M290 participates in 5-(2-hydroxyethyl)-4-methylthiazole binding. ATP contacts are provided by K365 and T415. 5-(2-hydroxyethyl)-4-methylthiazole is bound at residue A462. C465 functions as the Proton acceptor; for hydroxyethylthiazole kinase activity in the catalytic mechanism.

In the N-terminal section; belongs to the thiamine-phosphate synthase family. The protein in the C-terminal section; belongs to the Thz kinase family. As to quaternary structure, homooctamer. Requires Mg(2+) as cofactor.

The catalysed reaction is 2-[(2R,5Z)-2-carboxy-4-methylthiazol-5(2H)-ylidene]ethyl phosphate + 4-amino-2-methyl-5-(diphosphooxymethyl)pyrimidine + 2 H(+) = thiamine phosphate + CO2 + diphosphate. It catalyses the reaction 2-(2-carboxy-4-methylthiazol-5-yl)ethyl phosphate + 4-amino-2-methyl-5-(diphosphooxymethyl)pyrimidine + 2 H(+) = thiamine phosphate + CO2 + diphosphate. It carries out the reaction 4-methyl-5-(2-phosphooxyethyl)-thiazole + 4-amino-2-methyl-5-(diphosphooxymethyl)pyrimidine + H(+) = thiamine phosphate + diphosphate. The enzyme catalyses 5-(2-hydroxyethyl)-4-methylthiazole + ATP = 4-methyl-5-(2-phosphooxyethyl)-thiazole + ADP + H(+). Its pathway is cofactor biosynthesis; thiamine diphosphate biosynthesis; 4-methyl-5-(2-phosphoethyl)-thiazole from 5-(2-hydroxyethyl)-4-methylthiazole: step 1/1. The protein operates within cofactor biosynthesis; thiamine diphosphate biosynthesis; thiamine phosphate from 4-amino-2-methyl-5-diphosphomethylpyrimidine and 4-methyl-5-(2-phosphoethyl)-thiazole: step 1/1. Functionally, essential for thiamine biosynthesis. The kinase activity is involved in the salvage synthesis of TH-P from the thiazole. In terms of biological role, condenses 4-methyl-5-(beta-hydroxyethyl)thiazole monophosphate (THZ-P) and 2-methyl-4-amino-5-hydroxymethyl pyrimidine pyrophosphate (HMP-PP) to form thiamine monophosphate (TMP). The polypeptide is Thiamine biosynthetic bifunctional enzyme (THI6) (Saccharomyces cerevisiae (strain ATCC 204508 / S288c) (Baker's yeast)).